Here is a 127-residue protein sequence, read N- to C-terminus: MARIAGVDIPRDKRVEIALTYIYGIGLTRSRQILAKTGINPDTRTRDLTDAEVAALRAVVEGEYQVEGDLRRQEAMNIKRLIDIGTYRGRRHRLNLPVRGQRTRTNARTRKGVRKTVAGKKKAPAKK.

Residues 100–127 (GQRTRTNARTRKGVRKTVAGKKKAPAKK) are disordered. Positions 101–127 (QRTRTNARTRKGVRKTVAGKKKAPAKK) are enriched in basic residues.

The protein belongs to the universal ribosomal protein uS13 family. Part of the 30S ribosomal subunit. Forms a loose heterodimer with protein S19. Forms two bridges to the 50S subunit in the 70S ribosome.

Located at the top of the head of the 30S subunit, it contacts several helices of the 16S rRNA. In the 70S ribosome it contacts the 23S rRNA (bridge B1a) and protein L5 of the 50S subunit (bridge B1b), connecting the 2 subunits; these bridges are implicated in subunit movement. Contacts the tRNAs in the A and P-sites. The protein is Small ribosomal subunit protein uS13 of Synechococcus sp. (strain JA-3-3Ab) (Cyanobacteria bacterium Yellowstone A-Prime).